Consider the following 450-residue polypeptide: Interferon-related developmental regulator 1 (450 aa).

The span at methionine 1–proline 10 shows a compositional bias: basic residues. The segment at methionine 1–serine 46 is disordered. Over residues alanine 22–glycine 32 the composition is skewed to low complexity.

The protein belongs to the IFRD family. Interacts with PSIP1/LEDGF.

Its function is as follows. Could play a role in regulating gene activity in the proliferative and/or differentiative pathways induced by NGF. May be an autocrine factor that attenuates or amplifies the initial ligand-induced signal. This Sus scrofa (Pig) protein is Interferon-related developmental regulator 1 (IFRD1).